Here is a 561-residue protein sequence, read N- to C-terminus: MLQIKQDLLDALGQALKTMAPDSGVAAVFESPKVAAHGDFASTAAMQLAKPLKLNPRQVAENLRGLLLQAPAFARWVDAIEIAGPGFLNIRLKPEAKQQVVREVLQGADQYGMQLADSPHRMVVEFVSANPTGPLHVGHGRQAALGDAICNLFDTQGWDVWREFYYNDAGVQIQTLATSTQARAKGLKPGDAGWPEPAYNGDYIADIANDFLAKKTVKSDDREFTASGDVEDIDAIRQFAVAYLRHEQDLDLRAFSVRFDNYYLESSLYSSGRVDSAVQKLKDAGKTYEQDGALWLKSTDYGDDKDRVMKKGDGSYTYFVPDVAYHLAKWERGFSKAINIQGMDHHGTIARVRAGLQAASAGIPQGYPDYVLHTMVRVVRHGEEVKISKRAGSYVTLRDLIEWTSADAVRFFLLSRKPDTEYVFDIDLALAKNNENPVYYVQYAHARICSILGTWAAQGGDASQLKSVDLSALDGPQAQALMLLLAKYPDMLSNAAAGLAPHDVAFYLRELAACYHSYYDAERILVDDEAIKLARLALVAATAQVLHNGLKVLGVSAPHKM.

Residues 129-139 (ANPTGPLHVGH) carry the 'HIGH' region motif.

This sequence belongs to the class-I aminoacyl-tRNA synthetase family. In terms of assembly, monomer.

The protein localises to the cytoplasm. The catalysed reaction is tRNA(Arg) + L-arginine + ATP = L-arginyl-tRNA(Arg) + AMP + diphosphate. In Polaromonas sp. (strain JS666 / ATCC BAA-500), this protein is Arginine--tRNA ligase.